The sequence spans 241 residues: MNIKDIGVIVAKKPLKENTFIITVFTKNYGLYSGVVKASSKKSKFIYQEGNIVDFLWMARLHEHIGIAKCELIKSYTGYFITNKTKLYAFNSIISLIKELLHEREEYSNFFSFLINYLDNLSKKFFFRDYINFELALLDIAGYKLDLSKCAVSNVKQDLYYVSPKSGRALSYEVGKPYKDKLLILPKFLLSDNSKITLEEKRQALTLTNYFFNRYLFHNNRHAEARQAFMEYILHRCHPAT.

The protein belongs to the RecO family.

Functionally, involved in DNA repair and RecF pathway recombination. This chain is DNA repair protein RecO, found in Rickettsia canadensis (strain McKiel).